Here is a 280-residue protein sequence, read N- to C-terminus: Probable inactive shikimate kinase like 1, chloroplastic (280 aa).

The N-terminal 54 residues, 1–54 (MEIFSASASLTLTGFVPRLLPLLSPQARTTLCKPLLSSSSTRLISCHSRIAPSR), are a transit peptide targeting the chloroplast.

This sequence belongs to the shikimate kinase family.

It is found in the plastid. The protein localises to the chloroplast. Required for chloroplast biogenesis. This chain is Probable inactive shikimate kinase like 1, chloroplastic (SKL1), found in Arabidopsis thaliana (Mouse-ear cress).